Here is a 149-residue protein sequence, read N- to C-terminus: Nascent polypeptide-associated complex subunit beta-2 (149 aa).

Residues 38–103 enclose the NAC-A/B domain; it reads DKDNTKLQAE…PKENTLNGLY (66 aa).

This sequence belongs to the NAC-beta family. As to quaternary structure, part of the nascent polypeptide-associated complex (NAC), consisting of EGD2 and either EGD1 or BTT1. NAC associates with ribosomes via EGD1 or BTT1.

The protein localises to the cytoplasm. It is found in the nucleus. Acts as a component of the nascent polypeptide-associated complex (NAC), which promotes mitochondrial protein import by enhancing productive ribosome interactions with the outer mitochondrial membrane. Also blocks the inappropriate interaction of ribosomes translating non-secretory nascent polypeptides with translocation sites in the membrane of the endoplasmic reticulum. BTT1 may act as a transcription factor that exert a negative effect on the expression of several genes that are transcribed by RNA polymerase II. This Saccharomyces cerevisiae (strain YJM789) (Baker's yeast) protein is Nascent polypeptide-associated complex subunit beta-2 (BTT1).